Consider the following 1207-residue polypeptide: DNA-directed RNA polymerase subunit beta' (1207 aa).

Positions 60, 62, 75, and 78 each coordinate Zn(2+). Residues Asp449, Asp451, and Asp453 each coordinate Mg(2+). 4 residues coordinate Zn(2+): Cys822, Cys896, Cys903, and Cys906.

Belongs to the RNA polymerase beta' chain family. The RNAP catalytic core consists of 2 alpha, 1 beta, 1 beta' and 1 omega subunit. When a sigma factor is associated with the core the holoenzyme is formed, which can initiate transcription. The cofactor is Mg(2+). It depends on Zn(2+) as a cofactor.

It catalyses the reaction RNA(n) + a ribonucleoside 5'-triphosphate = RNA(n+1) + diphosphate. DNA-dependent RNA polymerase catalyzes the transcription of DNA into RNA using the four ribonucleoside triphosphates as substrates. This chain is DNA-directed RNA polymerase subunit beta', found in Staphylococcus saprophyticus subsp. saprophyticus (strain ATCC 15305 / DSM 20229 / NCIMB 8711 / NCTC 7292 / S-41).